The sequence spans 135 residues: MKIKESLAVGSFAFFGGILRYLIGLVLNQPTGFPYGTLCVNLIGAFCLPFLMRYIVARLHLSDQLALAIGTGFFGAFTTFSSFSVDAIRLVNQQQWSAFAWYVGISMVGGVLLSLLADYWAVKLTHNPEEQEVSQ.

4 consecutive transmembrane segments (helical) span residues leucine 7–leucine 27, glycine 32–methionine 52, leucine 65–valine 85, and tryptophan 96–leucine 116. Na(+)-binding residues include glycine 75 and threonine 78.

Belongs to the fluoride channel Fluc/FEX (TC 1.A.43) family.

Its subcellular location is the cell membrane. The enzyme catalyses fluoride(in) = fluoride(out). With respect to regulation, na(+) is not transported, but it plays an essential structural role and its presence is essential for fluoride channel function. Functionally, fluoride-specific ion channel. Important for reducing fluoride concentration in the cell, thus reducing its toxicity. In Latilactobacillus sakei subsp. sakei (strain 23K) (Lactobacillus sakei subsp. sakei), this protein is Fluoride-specific ion channel FluC 1.